Here is a 64-residue protein sequence, read N- to C-terminus: Temporin-ALh (64 aa).

The first 22 residues, 1–22 (MFPLKKSLLLLFFLATINLSLC), serve as a signal peptide directing secretion. The propeptide occupies 23 to 46 (EQERNAEEERRDEPDERNAEVEKR). Ser-62 carries the serine amide modification.

The protein belongs to the frog skin active peptide (FSAP) family. Temporin subfamily. In terms of tissue distribution, expressed by the skin glands.

Its subcellular location is the secreted. In terms of biological role, antimicrobial peptide with activity against Gram-positive and Gram-negative bacteria and against fungi. Has been tested against S.aureus (MIC=2.5 ug/mL), B.pumilus (MIC=7.5 ug/mL), B.cereus (MIC=75.0 ug/mL), E.coli (MIC=5.0 ug/mL), B.dysenteriae (MIC=20.0 ug/mL), A.cacoaceticus (MIC=60.0 ug/mL), P.aeruginosa (MIC=2.5 ug/mL) and C.albicans (MIC=2.5 ug/mL). Also shows a weak hemolytic activity. The sequence is that of Temporin-ALh from Amolops loloensis (Lolokou Sucker Frog).